A 365-amino-acid chain; its full sequence is Neutral protease 2 homolog mep20 (365 aa).

The signal sequence occupies residues 1–19 (MKVTILASAILALINGALA). Residues 20–172 (LPANTPTLDV…PQAIKLLDRR (153 aa)) constitute a propeptide that is removed on maturation. N-linked (GlcNAc...) asparagine glycosylation occurs at asparagine 73. Disulfide bonds link cysteine 178–cysteine 249 and cysteine 256–cysteine 274. Residue histidine 299 coordinates Zn(2+). Glutamate 300 is a catalytic residue. Positions 303 and 314 each coordinate Zn(2+). Asparagine 351 is a glycosylation site (N-linked (GlcNAc...) asparagine).

It belongs to the peptidase M35 family. It depends on Zn(2+) as a cofactor.

The protein resides in the secreted. The catalysed reaction is Preferential cleavage of bonds with hydrophobic residues in P1'. Also 3-Asn-|-Gln-4 and 8-Gly-|-Ser-9 bonds in insulin B chain.. Its function is as follows. Secreted metalloproteinase that allows assimilation of proteinaceous substrates. Shows high activities on basic nuclear substrates such as histone and protamine. May be involved in virulence. The sequence is that of Neutral protease 2 homolog mep20 (mep20) from Aspergillus fumigatus (Neosartorya fumigata).